Consider the following 411-residue polypeptide: Glutamate dehydrogenase (411 aa).

Residue Lys-102 is part of the active site.

This sequence belongs to the Glu/Leu/Phe/Val dehydrogenases family.

The catalysed reaction is L-glutamate + NAD(+) + H2O = 2-oxoglutarate + NH4(+) + NADH + H(+). It catalyses the reaction L-glutamate + NADP(+) + H2O = 2-oxoglutarate + NH4(+) + NADPH + H(+). In Vitis vinifera (Grape), this protein is Glutamate dehydrogenase (GDH).